A 322-amino-acid polypeptide reads, in one-letter code: Phosphatidylserine decarboxylase proenzyme (322 aa).

Active-site charge relay system; for autoendoproteolytic cleavage activity residues include aspartate 90, histidine 147, and serine 254. Serine 254 serves as the catalytic Schiff-base intermediate with substrate; via pyruvic acid; for decarboxylase activity. Pyruvic acid (Ser); by autocatalysis is present on serine 254. The segment at 293–322 is disordered; it reads PDAEPAPLPAEEIEAEHDASPLVDDKKDQV. Over residues 308–322 the composition is skewed to basic and acidic residues; the sequence is EHDASPLVDDKKDQV.

Belongs to the phosphatidylserine decarboxylase family. PSD-B subfamily. Prokaryotic type I sub-subfamily. As to quaternary structure, heterodimer of a large membrane-associated beta subunit and a small pyruvoyl-containing alpha subunit. It depends on pyruvate as a cofactor. Is synthesized initially as an inactive proenzyme. Formation of the active enzyme involves a self-maturation process in which the active site pyruvoyl group is generated from an internal serine residue via an autocatalytic post-translational modification. Two non-identical subunits are generated from the proenzyme in this reaction, and the pyruvate is formed at the N-terminus of the alpha chain, which is derived from the carboxyl end of the proenzyme. The autoendoproteolytic cleavage occurs by a canonical serine protease mechanism, in which the side chain hydroxyl group of the serine supplies its oxygen atom to form the C-terminus of the beta chain, while the remainder of the serine residue undergoes an oxidative deamination to produce ammonia and the pyruvoyl prosthetic group on the alpha chain. During this reaction, the Ser that is part of the protease active site of the proenzyme becomes the pyruvoyl prosthetic group, which constitutes an essential element of the active site of the mature decarboxylase.

Its subcellular location is the cell membrane. The enzyme catalyses a 1,2-diacyl-sn-glycero-3-phospho-L-serine + H(+) = a 1,2-diacyl-sn-glycero-3-phosphoethanolamine + CO2. Its pathway is phospholipid metabolism; phosphatidylethanolamine biosynthesis; phosphatidylethanolamine from CDP-diacylglycerol: step 2/2. Functionally, catalyzes the formation of phosphatidylethanolamine (PtdEtn) from phosphatidylserine (PtdSer). The protein is Phosphatidylserine decarboxylase proenzyme of Escherichia coli (strain 55989 / EAEC).